Here is a 401-residue protein sequence, read N- to C-terminus: Carbamoyl phosphate synthase small chain (401 aa).

The segment at 1–203 (MTATPAWTIQ…EGYSTLGETD (203 aa)) is CPSase. L-glutamine-binding residues include Ser-56, Gly-255, and Gly-257. A Glutamine amidotransferase type-1 domain is found at 207 to 395 (HVVALDYGVK…LNLIREKKGE (189 aa)). Residue Cys-284 is the Nucleophile of the active site. Positions 285, 288, 326, 328, and 329 each coordinate L-glutamine. Active-site residues include His-368 and Glu-370.

The protein belongs to the CarA family. Composed of two chains; the small (or glutamine) chain promotes the hydrolysis of glutamine to ammonia, which is used by the large (or ammonia) chain to synthesize carbamoyl phosphate. Tetramer of heterodimers (alpha,beta)4.

It catalyses the reaction hydrogencarbonate + L-glutamine + 2 ATP + H2O = carbamoyl phosphate + L-glutamate + 2 ADP + phosphate + 2 H(+). The catalysed reaction is L-glutamine + H2O = L-glutamate + NH4(+). Its pathway is amino-acid biosynthesis; L-arginine biosynthesis; carbamoyl phosphate from bicarbonate: step 1/1. It functions in the pathway pyrimidine metabolism; UMP biosynthesis via de novo pathway; (S)-dihydroorotate from bicarbonate: step 1/3. Its function is as follows. Small subunit of the glutamine-dependent carbamoyl phosphate synthetase (CPSase). CPSase catalyzes the formation of carbamoyl phosphate from the ammonia moiety of glutamine, carbonate, and phosphate donated by ATP, constituting the first step of 2 biosynthetic pathways, one leading to arginine and/or urea and the other to pyrimidine nucleotides. The small subunit (glutamine amidotransferase) binds and cleaves glutamine to supply the large subunit with the substrate ammonia. The polypeptide is Carbamoyl phosphate synthase small chain (Rhizobium meliloti (strain 1021) (Ensifer meliloti)).